Here is a 208-residue protein sequence, read N- to C-terminus: Putative ankyrin repeat protein Ta0196 (208 aa).

ANK repeat units follow at residues 49–78, 82–111, 115–144, and 148–177; these read YQRN…HIDD, EGNT…SIDI, AGNT…NINI, and EGDT…DLNA.

In Thermoplasma acidophilum (strain ATCC 25905 / DSM 1728 / JCM 9062 / NBRC 15155 / AMRC-C165), this protein is Putative ankyrin repeat protein Ta0196.